Here is a 114-residue protein sequence, read N- to C-terminus: Cystatin Pr17a (114 aa).

A signal peptide spans 1-18 (MSCLKIITLFLFLAAVIA). Residues 31–109 (GAPEQINPND…QAWLKKTSVK (79 aa)) form the Cystatin domain. Cys-93 and Cys-113 are disulfide-bonded.

This sequence belongs to the cystatin family. In terms of tissue distribution, expressed by the venom gland (posterior main gland) (at protein level).

It is found in the secreted. The chain is Cystatin Pr17a from Platymeris rhadamanthus (Red spot assassin bug).